The sequence spans 577 residues: Adenine deaminase (577 aa).

Belongs to the metallo-dependent hydrolases superfamily. Adenine deaminase family. It depends on Mn(2+) as a cofactor.

The enzyme catalyses adenine + H2O + H(+) = hypoxanthine + NH4(+). The protein is Adenine deaminase of Bacillus velezensis (strain DSM 23117 / BGSC 10A6 / LMG 26770 / FZB42) (Bacillus amyloliquefaciens subsp. plantarum).